The sequence spans 512 residues: Ankyrin repeat domain-containing protein SOWAHC (512 aa).

2 positions are modified to phosphoserine: S82 and S125. The interval 126-248 is disordered; it reads LGLGGEVSDQ…AEEESSVGAS (123 aa). The segment covering 173–186 has biased composition (low complexity); that stretch reads PPQGEAEGGSSPSG. Residue S205 is modified to Phosphoserine. Positions 214–228 are enriched in gly residues; it reads PGDGNAGGRSRGGGD. Low complexity predominate over residues 229-248; that stretch reads SDTASLASSSAEEESSVGAS. 2 ANK repeats span residues 288 to 317 and 327 to 357; these read TGFTCLHWAAKHGRQELLAMLVNFATKHQL and GGYTALHLAAMHGHVEVVKLLVGAYDADVDI. The residue at position 395 (R395) is an Omega-N-methylarginine. Residues 427-500 are disordered; sequence HVPEGWTGGS…EERSLRGYSS (74 aa). Positions 453 to 462 are enriched in basic residues; sequence MKPRLNKIRF. A compositionally biased stretch (acidic residues) spans 481–492; it reads EEGEEEEEEEEE.

Belongs to the SOWAH family.

The polypeptide is Ankyrin repeat domain-containing protein SOWAHC (Sowahc) (Mus musculus (Mouse)).